Consider the following 88-residue polypeptide: Sec-independent protein translocase protein TatA (88 aa).

A helical transmembrane segment spans residues 1–21 (MGGIGIWQLAIITVIVILLFG). The interval 46 to 88 (DNDKDSTQVDDKDSTQVDDNAKQPSNKKVEENIKEQSKEKDRA) is disordered.

This sequence belongs to the TatA/E family. As to quaternary structure, the Tat system comprises two distinct complexes: a TatABC complex, containing multiple copies of TatA, TatB and TatC subunits, and a separate TatA complex, containing only TatA subunits. Substrates initially bind to the TatABC complex, which probably triggers association of the separate TatA complex to form the active translocon.

Its subcellular location is the cell inner membrane. Functionally, part of the twin-arginine translocation (Tat) system that transports large folded proteins containing a characteristic twin-arginine motif in their signal peptide across membranes. TatA could form the protein-conducting channel of the Tat system. This chain is Sec-independent protein translocase protein TatA, found in Psychromonas ingrahamii (strain DSM 17664 / CCUG 51855 / 37).